Consider the following 270-residue polypeptide: Tryptophan synthase alpha chain (270 aa).

Catalysis depends on proton acceptor residues glutamate 49 and aspartate 60.

This sequence belongs to the TrpA family. In terms of assembly, tetramer of two alpha and two beta chains.

The catalysed reaction is (1S,2R)-1-C-(indol-3-yl)glycerol 3-phosphate + L-serine = D-glyceraldehyde 3-phosphate + L-tryptophan + H2O. Its pathway is amino-acid biosynthesis; L-tryptophan biosynthesis; L-tryptophan from chorismate: step 5/5. In terms of biological role, the alpha subunit is responsible for the aldol cleavage of indoleglycerol phosphate to indole and glyceraldehyde 3-phosphate. This is Tryptophan synthase alpha chain from Buchnera aphidicola subsp. Diuraphis noxia.